The chain runs to 499 residues: Glutamyl-tRNA(Gln) amidotransferase subunit A (499 aa).

Catalysis depends on charge relay system residues Lys76 and Ser151. Ser175 acts as the Acyl-ester intermediate in catalysis.

This sequence belongs to the amidase family. GatA subfamily. In terms of assembly, heterotrimer of A, B and C subunits.

It catalyses the reaction L-glutamyl-tRNA(Gln) + L-glutamine + ATP + H2O = L-glutaminyl-tRNA(Gln) + L-glutamate + ADP + phosphate + H(+). Its function is as follows. Allows the formation of correctly charged Gln-tRNA(Gln) through the transamidation of misacylated Glu-tRNA(Gln) in organisms which lack glutaminyl-tRNA synthetase. The reaction takes place in the presence of glutamine and ATP through an activated gamma-phospho-Glu-tRNA(Gln). This chain is Glutamyl-tRNA(Gln) amidotransferase subunit A, found in Rhodopirellula baltica (strain DSM 10527 / NCIMB 13988 / SH1).